The following is a 533-amino-acid chain: 1-aminocyclopropane-1-carboxylate synthase 5 (533 aa).

Lys-358 bears the N6-(pyridoxal phosphate)lysine mark.

This sequence belongs to the class-I pyridoxal-phosphate-dependent aminotransferase family. Pyridoxal 5'-phosphate serves as cofactor. In terms of tissue distribution, expressed in shoots and leaf blades. Expressed at low levels in leaf sheaths. Expressed in vasculature of roots and shoots.

It carries out the reaction S-adenosyl-L-methionine = 1-aminocyclopropane-1-carboxylate + S-methyl-5'-thioadenosine + H(+). It functions in the pathway alkene biosynthesis; ethylene biosynthesis via S-adenosyl-L-methionine; ethylene from S-adenosyl-L-methionine: step 1/2. Its function is as follows. Catalyzes the formation of 1-aminocyclopropane-1-carboxylate, a direct precursor of ethylene in higher plants. This chain is 1-aminocyclopropane-1-carboxylate synthase 5, found in Oryza sativa subsp. japonica (Rice).